The sequence spans 218 residues: Cytochrome b6 (218 aa).

Residues 35–55 (IFYCLGGITLVCFLIQFATGF) form a helical membrane-spanning segment. Cys38 serves as a coordination point for heme c. His89 and His103 together coordinate heme b. 3 consecutive transmembrane segments (helical) span residues 93-113 (ASMM…TGGF), 119-139 (LTWV…VTGY), and 189-209 (LHTF…FLMI). Heme b contacts are provided by His190 and His205.

It belongs to the cytochrome b family. PetB subfamily. In terms of assembly, the 4 large subunits of the cytochrome b6-f complex are cytochrome b6, subunit IV (17 kDa polypeptide, PetD), cytochrome f and the Rieske protein, while the 4 small subunits are PetG, PetL, PetM and PetN. The complex functions as a dimer. Heme b serves as cofactor. It depends on heme c as a cofactor.

The protein localises to the cellular thylakoid membrane. In terms of biological role, component of the cytochrome b6-f complex, which mediates electron transfer between photosystem II (PSII) and photosystem I (PSI), cyclic electron flow around PSI, and state transitions. The polypeptide is Cytochrome b6 (Synechococcus sp. (strain CC9902)).